The following is a 157-amino-acid chain: Small ribosomal subunit protein uS13 (157 aa).

It belongs to the universal ribosomal protein uS13 family. In terms of assembly, part of the 30S ribosomal subunit. Forms a loose heterodimer with protein S19. Forms two bridges to the 50S subunit in the 70S ribosome.

Located at the top of the head of the 30S subunit, it contacts several helices of the 16S rRNA. In the 70S ribosome it contacts the 23S rRNA (bridge B1a) and protein L5 of the 50S subunit (bridge B1b), connecting the 2 subunits; these bridges are implicated in subunit movement. The polypeptide is Small ribosomal subunit protein uS13 (Thermofilum pendens (strain DSM 2475 / Hrk 5)).